Consider the following 158-residue polypeptide: Transcription elongation factor GreA (158 aa).

The protein belongs to the GreA/GreB family.

Necessary for efficient RNA polymerase transcription elongation past template-encoded arresting sites. The arresting sites in DNA have the property of trapping a certain fraction of elongating RNA polymerases that pass through, resulting in locked ternary complexes. Cleavage of the nascent transcript by cleavage factors such as GreA or GreB allows the resumption of elongation from the new 3'terminus. GreA releases sequences of 2 to 3 nucleotides. This is Transcription elongation factor GreA from Ralstonia nicotianae (strain ATCC BAA-1114 / GMI1000) (Ralstonia solanacearum).